Here is a 174-residue protein sequence, read N- to C-terminus: Peptide deformylase (174 aa).

Fe cation-binding residues include Cys94 and His136. Glu137 is a catalytic residue. His140 contributes to the Fe cation binding site.

It belongs to the polypeptide deformylase family. The cofactor is Fe(2+).

The catalysed reaction is N-terminal N-formyl-L-methionyl-[peptide] + H2O = N-terminal L-methionyl-[peptide] + formate. In terms of biological role, removes the formyl group from the N-terminal Met of newly synthesized proteins. Requires at least a dipeptide for an efficient rate of reaction. N-terminal L-methionine is a prerequisite for activity but the enzyme has broad specificity at other positions. The chain is Peptide deformylase from Maricaulis maris (strain MCS10) (Caulobacter maris).